A 117-amino-acid polypeptide reads, in one-letter code: Large ribosomal subunit protein uL18 (117 aa).

This sequence belongs to the universal ribosomal protein uL18 family. In terms of assembly, part of the 50S ribosomal subunit; part of the 5S rRNA/L5/L18/L25 subcomplex. Contacts the 5S and 23S rRNAs.

In terms of biological role, this is one of the proteins that bind and probably mediate the attachment of the 5S RNA into the large ribosomal subunit, where it forms part of the central protuberance. This is Large ribosomal subunit protein uL18 from Francisella tularensis subsp. tularensis (strain FSC 198).